A 109-amino-acid chain; its full sequence is Nucleoid-associated protein YbaB (109 aa).

This sequence belongs to the YbaB/EbfC family. As to quaternary structure, homodimer.

The protein localises to the cytoplasm. It localises to the nucleoid. Its function is as follows. Binds to DNA and alters its conformation. May be involved in regulation of gene expression, nucleoid organization and DNA protection. This is Nucleoid-associated protein YbaB from Escherichia coli O8 (strain IAI1).